We begin with the raw amino-acid sequence, 229 residues long: Heptahelical transmembrane protein ADIPOR2 (229 aa).

Over M1–A4 the chain is Cytoplasmic. The helical transmembrane segment at A5–V25 threads the bilayer. The Extracellular segment spans residues P26–R30. Residues M31–A51 form a helical membrane-spanning segment. At C52–Y66 the chain is on the cytoplasmic side. Residues A67–C87 traverse the membrane as a helical segment. At H88–R92 the chain is on the extracellular side. Residues V93–P113 form a helical membrane-spanning segment. Topologically, residues P114–R124 are cytoplasmic. A helical transmembrane segment spans residues A125–L145. At N146–Y153 the chain is on the extracellular side. Residues L154 to V174 form a helical membrane-spanning segment. Over S175–Q194 the chain is Cytoplasmic. A helical membrane pass occupies residues I195–L215. Over N216 to S229 the chain is Extracellular.

The protein belongs to the ADIPOR family.

Its subcellular location is the membrane. May play a role in abiotic stress response. This is Heptahelical transmembrane protein ADIPOR2 (ADIPOR2) from Oryza sativa subsp. japonica (Rice).